A 711-amino-acid polypeptide reads, in one-letter code: Quinolinate synthase, chloroplastic (711 aa).

Residues M1–R41 constitute a chloroplast transit peptide. The segment at P17–S63 is disordered. Catalysis depends on C114, which acts as the Cysteine persulfide intermediate. Iminosuccinate-binding residues include H263 and S289. Position 343 (C343) interacts with [4Fe-4S] cluster. Residues Y372–N374 and S394 contribute to the iminosuccinate site. Residue C467 coordinates [4Fe-4S] cluster. Residues H493 to E495 and T518 contribute to the iminosuccinate site. C631 serves as a coordination point for [4Fe-4S] cluster.

It belongs to the quinolinate synthase family. Type 1 subfamily. Homodimer. [4Fe-4S] cluster serves as cofactor.

The protein resides in the plastid. Its subcellular location is the chloroplast. The catalysed reaction is iminosuccinate + dihydroxyacetone phosphate = quinolinate + phosphate + 2 H2O + H(+). It participates in cofactor biosynthesis; NAD(+) biosynthesis; quinolinate from iminoaspartate: step 1/1. In terms of biological role, catalyzes the condensation of iminoaspartate with dihydroxyacetone phosphate to form quinolinate. This chain is Quinolinate synthase, chloroplastic, found in Oryza sativa subsp. japonica (Rice).